The sequence spans 694 residues: Elongation factor G (694 aa).

The 276-residue stretch at 8–283 (ERYRNIGIMA…AVIDYLPAPV (276 aa)) folds into the tr-type G domain. GTP-binding positions include 17–24 (AHIDAGKT), 81–85 (DTPGH), and 135–138 (NKMD).

Belongs to the TRAFAC class translation factor GTPase superfamily. Classic translation factor GTPase family. EF-G/EF-2 subfamily.

Its subcellular location is the cytoplasm. Its function is as follows. Catalyzes the GTP-dependent ribosomal translocation step during translation elongation. During this step, the ribosome changes from the pre-translocational (PRE) to the post-translocational (POST) state as the newly formed A-site-bound peptidyl-tRNA and P-site-bound deacylated tRNA move to the P and E sites, respectively. Catalyzes the coordinated movement of the two tRNA molecules, the mRNA and conformational changes in the ribosome. The protein is Elongation factor G of Paramagnetospirillum magneticum (strain ATCC 700264 / AMB-1) (Magnetospirillum magneticum).